The chain runs to 256 residues: Fructose-1,6-bisphosphatase/inositol-1-monophosphatase (256 aa).

Mg(2+) is bound by residues Glu67, Asp83, Leu85, and Asp86. Substrate-binding positions include 86 to 88, Arg170, Ile175, and Arg194; that span reads DGS. Residue Asp201 coordinates Mg(2+).

Belongs to the inositol monophosphatase superfamily. FBPase class 4 family. In terms of assembly, homodimer. The cofactor is Mg(2+).

The catalysed reaction is beta-D-fructose 1,6-bisphosphate + H2O = beta-D-fructose 6-phosphate + phosphate. It catalyses the reaction a myo-inositol phosphate + H2O = myo-inositol + phosphate. Functionally, phosphatase with broad specificity; it can dephosphorylate fructose 1,6-bisphosphate (FBP) and inositol-1-phosphate (IMP). However, while possessing a high FBPase activity in vitro, does not participate in gluconeogenesis in vivo. The sequence is that of Fructose-1,6-bisphosphatase/inositol-1-monophosphatase (suhB) from Thermococcus kodakarensis (strain ATCC BAA-918 / JCM 12380 / KOD1) (Pyrococcus kodakaraensis (strain KOD1)).